The sequence spans 461 residues: Photosystem II CP43 reaction center protein (461 aa).

The propeptide occupies 1–2 (ME). Thr-3 bears the N-acetylthreonine mark. The residue at position 3 (Thr-3) is a Phosphothreonine. The next 5 membrane-spanning stretches (helical) occupy residues 57-81 (LFEV…PHLA), 122-143 (LLGP…KDRN), 166-188 (KALY…RKIS), 243-263 (KPFA…LSYS), and 279-300 (WFNN…ASQA). Glu-355 provides a ligand contact to [CaMn4O5] cluster. The chain crosses the membrane as a helical span at residues 435-459 (RARAAAAGFEKGIDRDFEPVLSMTP).

The protein belongs to the PsbB/PsbC family. PsbC subfamily. PSII is composed of 1 copy each of membrane proteins PsbA, PsbB, PsbC, PsbD, PsbE, PsbF, PsbH, PsbI, PsbJ, PsbK, PsbL, PsbM, PsbT, PsbX, PsbY, PsbZ, Psb30/Ycf12, at least 3 peripheral proteins of the oxygen-evolving complex and a large number of cofactors. It forms dimeric complexes. Binds multiple chlorophylls and provides some of the ligands for the Ca-4Mn-5O cluster of the oxygen-evolving complex. It may also provide a ligand for a Cl- that is required for oxygen evolution. PSII binds additional chlorophylls, carotenoids and specific lipids. is required as a cofactor.

It is found in the plastid. The protein localises to the chloroplast thylakoid membrane. One of the components of the core complex of photosystem II (PSII). It binds chlorophyll and helps catalyze the primary light-induced photochemical processes of PSII. PSII is a light-driven water:plastoquinone oxidoreductase, using light energy to abstract electrons from H(2)O, generating O(2) and a proton gradient subsequently used for ATP formation. This chain is Photosystem II CP43 reaction center protein, found in Trachelium caeruleum (Blue throatwort).